The primary structure comprises 172 residues: 3-hydroxydecanoyl-[acyl-carrier-protein] dehydratase (172 aa).

The active site involves His-71.

The protein belongs to the thioester dehydratase family. FabA subfamily. Homodimer.

Its subcellular location is the cytoplasm. The catalysed reaction is a (3R)-hydroxyacyl-[ACP] = a (2E)-enoyl-[ACP] + H2O. The enzyme catalyses (3R)-hydroxydecanoyl-[ACP] = (2E)-decenoyl-[ACP] + H2O. It catalyses the reaction (2E)-decenoyl-[ACP] = (3Z)-decenoyl-[ACP]. It functions in the pathway lipid metabolism; fatty acid biosynthesis. Necessary for the introduction of cis unsaturation into fatty acids. Catalyzes the dehydration of (3R)-3-hydroxydecanoyl-ACP to E-(2)-decenoyl-ACP and then its isomerization to Z-(3)-decenoyl-ACP. Can catalyze the dehydratase reaction for beta-hydroxyacyl-ACPs with saturated chain lengths up to 16:0, being most active on intermediate chain length. This Aliivibrio fischeri (strain ATCC 700601 / ES114) (Vibrio fischeri) protein is 3-hydroxydecanoyl-[acyl-carrier-protein] dehydratase.